Here is a 456-residue protein sequence, read N- to C-terminus: Bifunctional protein GlmU (456 aa).

The pyrophosphorylase stretch occupies residues 1-230 (MDKRFAVVLA…FQETLGVNDR (230 aa)). UDP-N-acetyl-alpha-D-glucosamine is bound by residues 9–12 (LAAG), lysine 23, glutamine 73, and 78–79 (GT). Aspartate 103 is a Mg(2+) binding site. 4 residues coordinate UDP-N-acetyl-alpha-D-glucosamine: glycine 140, glutamate 155, asparagine 170, and asparagine 228. Asparagine 228 is a binding site for Mg(2+). Positions 231 to 251 (VALSQAEQFMKERINKRHMQN) are linker. Residues 252 to 456 (GVTLIDPMNT…DDYVKNIHKK (205 aa)) are N-acetyltransferase. UDP-N-acetyl-alpha-D-glucosamine-binding residues include arginine 333 and lysine 351. The active-site Proton acceptor is histidine 363. UDP-N-acetyl-alpha-D-glucosamine-binding residues include tyrosine 366 and asparagine 377. Acetyl-CoA contacts are provided by residues 386 to 387 (NY), alanine 423, and arginine 440.

The protein in the N-terminal section; belongs to the N-acetylglucosamine-1-phosphate uridyltransferase family. In the C-terminal section; belongs to the transferase hexapeptide repeat family. In terms of assembly, homotrimer. The cofactor is Mg(2+).

The protein localises to the cytoplasm. The enzyme catalyses alpha-D-glucosamine 1-phosphate + acetyl-CoA = N-acetyl-alpha-D-glucosamine 1-phosphate + CoA + H(+). The catalysed reaction is N-acetyl-alpha-D-glucosamine 1-phosphate + UTP + H(+) = UDP-N-acetyl-alpha-D-glucosamine + diphosphate. It participates in nucleotide-sugar biosynthesis; UDP-N-acetyl-alpha-D-glucosamine biosynthesis; N-acetyl-alpha-D-glucosamine 1-phosphate from alpha-D-glucosamine 6-phosphate (route II): step 2/2. It functions in the pathway nucleotide-sugar biosynthesis; UDP-N-acetyl-alpha-D-glucosamine biosynthesis; UDP-N-acetyl-alpha-D-glucosamine from N-acetyl-alpha-D-glucosamine 1-phosphate: step 1/1. The protein operates within bacterial outer membrane biogenesis; LPS lipid A biosynthesis. In terms of biological role, catalyzes the last two sequential reactions in the de novo biosynthetic pathway for UDP-N-acetylglucosamine (UDP-GlcNAc). The C-terminal domain catalyzes the transfer of acetyl group from acetyl coenzyme A to glucosamine-1-phosphate (GlcN-1-P) to produce N-acetylglucosamine-1-phosphate (GlcNAc-1-P), which is converted into UDP-GlcNAc by the transfer of uridine 5-monophosphate (from uridine 5-triphosphate), a reaction catalyzed by the N-terminal domain. The protein is Bifunctional protein GlmU of Bacillus subtilis (strain 168).